Here is a 142-residue protein sequence, read N- to C-terminus: Hemoglobin subunit alpha-B (142 aa).

The region spanning 2–142 (PFSASDRHDI…VSETLYSKYR (141 aa)) is the Globin domain. Gln-59 lines the O2 pocket. His-88 lines the heme b pocket.

It belongs to the globin family. Heterotetramer of either two alpha-B chains or two alpha-C chains and two beta chains. The two major hemoglobins, B and C, associate upon deoxygenation to form a trimer of tetramers, BC2, that has a much lower affinity for oxygen than either component alone. As to expression, red blood cells.

In terms of biological role, the alpha-B chain is a component of adult hemoglobin B. This chain is Hemoglobin subunit alpha-B, found in Aquarana catesbeiana (American bullfrog).